Here is a 388-residue protein sequence, read N- to C-terminus: Nesprin-4 (388 aa).

Topologically, residues 1 to 339 (MALVPPLGRE…GVPAPASKRP (339 aa)) are cytoplasmic. Residues 60-92 (ELKSTESATSPSRLPLASSHEHQDGGKPCEHSD) form a disordered region. The span at 78–92 (SHEHQDGGKPCEHSD) shows a compositional bias: basic and acidic residues. In terms of domain architecture, KASH spans 331 to 388 (VPAPASKRPLTLFFLLLFLLLVGATLLLPLSGVSCCSHARLARTPYLVLSYVNGLPPI). The helical; Anchor for type IV membrane protein transmembrane segment at 340-360 (LTLFFLLLFLLLVGATLLLPL) threads the bilayer. At 361-388 (SGVSCCSHARLARTPYLVLSYVNGLPPI) the chain is on the perinuclear space side.

Belongs to the nesprin family. As to quaternary structure, core component of LINC complexes which are composed of inner nuclear membrane SUN domain-containing proteins coupled to outer nuclear membrane KASH domain-containing nesprins. SUN and KASH domain-containing proteins seem to bind each other promiscuously; however, differentially expression of LINC complex constituents can give rise to specific assemblies. Probably part of a SUN1-containing LINC complex. Interacts with kinesins KIF5B and KLC1. In terms of processing, the disulfid bond with SUN1 or SUN2 is required for stability of the respective LINC complex under tensile forces. Expressed in secretory epithelial cells, such as those found in exocrine pancreas, bulbourethral gland, mammary gland and salivary gland (at protein level). Also expressed in the cochlea, where it is restricted primarily to the 3 rows of outer hair cells and 1 row of inner hair cells (at protein level). Not detected in other cells of the cochlea, including Deiter's cells and pillar cells, nor in liver and kidney (at protein level).

The protein resides in the nucleus outer membrane. In terms of biological role, as a component of the LINC (LInker of Nucleoskeleton and Cytoskeleton) complex, involved in the connection between the nuclear lamina and the cytoskeleton. The nucleocytoplasmic interactions established by the LINC complex play an important role in the transmission of mechanical forces across the nuclear envelope and in nuclear movement and positioning. Behaves as a kinesin cargo, providing a functional binding site for kinesin-1 at the nuclear envelope. Hence may contribute to the establishment of secretory epithelial morphology, by promoting kinesin-dependent apical migration of the centrosome and Golgi apparatus and basal localization of the nucleus. The sequence is that of Nesprin-4 (Syne4) from Mus musculus (Mouse).